Reading from the N-terminus, the 138-residue chain is Hydrogenase maturation factor HypA (138 aa).

Residue His2 participates in Ni(2+) binding. Residues Cys73, Cys76, Cys110, and Cys113 each contribute to the Zn(2+) site.

This sequence belongs to the HypA/HybF family.

Its function is as follows. Involved in the maturation of [NiFe] hydrogenases. Required for nickel insertion into the metal center of the hydrogenase. This Thermococcus sibiricus (strain DSM 12597 / MM 739) protein is Hydrogenase maturation factor HypA.